The sequence spans 200 residues: dITP/XTP pyrophosphatase (200 aa).

7 to 12 (SNNYHK) is a binding site for substrate. D68 functions as the Proton acceptor in the catalytic mechanism. Mg(2+) is bound at residue D68. Substrate is bound by residues S69, 147 to 150 (FGYD), K170, and 175 to 176 (HR).

This sequence belongs to the HAM1 NTPase family. Homodimer. It depends on Mg(2+) as a cofactor.

It carries out the reaction XTP + H2O = XMP + diphosphate + H(+). It catalyses the reaction dITP + H2O = dIMP + diphosphate + H(+). The enzyme catalyses ITP + H2O = IMP + diphosphate + H(+). In terms of biological role, pyrophosphatase that catalyzes the hydrolysis of nucleoside triphosphates to their monophosphate derivatives, with a high preference for the non-canonical purine nucleotides XTP (xanthosine triphosphate), dITP (deoxyinosine triphosphate) and ITP. Seems to function as a house-cleaning enzyme that removes non-canonical purine nucleotides from the nucleotide pool, thus preventing their incorporation into DNA/RNA and avoiding chromosomal lesions. The chain is dITP/XTP pyrophosphatase from Acholeplasma laidlawii (strain PG-8A).